The following is a 215-amino-acid chain: Calmodulin-like protein 5 (215 aa).

The tract at residues 38-61 (KNSPPSPSTMLPSPSSSSAPTKRI) is disordered. Over residues 45-57 (STMLPSPSSSSAP) the composition is skewed to low complexity. 4 EF-hand domains span residues 61 to 96 (IDPS…LGIY), 97 to 132 (IPDK…IVDE), 139 to 174 (TEEE…LGLK), and 177 to 212 (KTLD…GGFS). Residues D74, N76, D78, R80, E85, D110, N112, D114, C116, E121, D152, D154, D156, E163, D190, D192, D194, R196, and E201 each contribute to the Ca(2+) site.

The protein belongs to the calmodulin family.

Functionally, potential calcium sensor. The protein is Calmodulin-like protein 5 (CML5) of Arabidopsis thaliana (Mouse-ear cress).